The following is a 716-amino-acid chain: MSVSVALKAKPIAYGAVACANYVNLSGAGSISVKYEDVALLDKQNKESNVSIQLNGSDSPVFGSKLALQTFSQVYPKLFIGENDRSLVESWVETASALAGNHNFLELSSLLAQLDDHLIMRSLFVGYSLTSADFSIWGALKSNNMAAGAVRTGQYFNLARWYKFMDSQNAVSVTMEEFTKAVNISKKQKSSGPNYEIGLPDAIDGKVVTRFPPEPSGYLHIGHAKAALLNQYFANKYHGKLIVRFDDTNPSKENSEFQDAILEDVALLGIKPDVVTYTSDYLDTIHQYCVDMIKSGQAYADDTDVETMRHERTEGIPSKHRDRPIEESLEILSEMDKGSDVGLKNCIRAKISYENPNKAMRDPVIYRCNLLPHHRTGTKYRAYPTYDFACPIVDSLEGVTHALRTTEYRDRNPLYQWMIKAMNLRKIHVWEFSRMNFVRTLLSKRKLTEIVDHGLVWGWDDPRFPTVRGVRRRGMTIEALQQYIVSQGPSKNILTLDWTSFWATNKKIIDPVAPRHTAVESGDVVKATIVNGPAAPYAEDRPRHKKNPELGNKKSIFANEILIEQADAQSFKQDEEVTLMDWGNAYVREINRDASGKVTSLKLELHLDGDFKKTEKKVTWLADTEDKTPVDLVDFDYLITKDKLEEGENYKDFLTPQTEFHSPVFADVGIKNLKKGDIIQVERKGYYIVDVPFDGTQAVLFNIPDGKTVNRYGVKN.

The residue at position 190 (serine 190) is a Phosphoserine. 210 to 212 (RFP) is an L-glutamate binding site. Positions 215–224 (PSGYLHIGHA) match the 'HIGH' region motif. Histidine 220 provides a ligand contact to ATP. L-glutamate contacts are provided by residues aspartate 246, 386–390 (YDFAC), and arginine 404. ATP is bound by residues glutamate 407 and 441–445 (LLSKR). The short motif at 441-445 (LLSKR) is the 'KMSKS' region element.

This sequence belongs to the class-I aminoacyl-tRNA synthetase family. Glutamate--tRNA ligase type 2 subfamily. Component of a yeast aminoacyl-tRNA synthase (aaRS) complex formed by methionyl-tRNA synthase, glutamyl-tRNA synthase and the tRNA aminoacylation cofactor arc1 in a stoichiometric complex. Interacts with arc1/SPAC30C2.04.

The protein localises to the cytoplasm. Its subcellular location is the nucleus. It catalyses the reaction tRNA(Glu) + L-glutamate + ATP = L-glutamyl-tRNA(Glu) + AMP + diphosphate. Its function is as follows. Catalyzes the attachment of glutamate to tRNA(Glu) in a two-step reaction: glutamate is first activated by ATP to form Glu-AMP and then transferred to the acceptor end of tRNA(Glu). This chain is Probable glutamate--tRNA ligase, cytoplasmic (gus1), found in Schizosaccharomyces pombe (strain 972 / ATCC 24843) (Fission yeast).